The primary structure comprises 320 residues: Glutaconate CoA-transferase subunit A (320 aa).

Belongs to the 3-oxoacid CoA-transferase subunit A family. In terms of assembly, heterooctamer of four A and four B subunits.

The protein resides in the cytoplasm. The catalysed reaction is trans-glutaconate + acetyl-CoA = (2E)-glutaconyl-CoA + acetate. It participates in amino-acid degradation; L-glutamate degradation via hydroxyglutarate pathway; crotonoyl-CoA from L-glutamate: step 3/5. Catalyzes the transfer of the CoA moiety from acetyl-CoA to (R)-2-hydroxyglutarate and related compounds like glutaconate. The chain is Glutaconate CoA-transferase subunit A (gctA) from Acidaminococcus fermentans (strain ATCC 25085 / DSM 20731 / CCUG 9996 / CIP 106432 / VR4).